Consider the following 584-residue polypeptide: uncharacterized protein (584 aa).

Residues 15–35 traverse the membrane as a helical segment; it reads FIFFVLVFFICIIFGCIYESL. 2 stretches are compositionally biased toward polar residues: residues 184 to 194 and 204 to 225; these read DVSTENSYTHN and GKRT…SYNI. Positions 184–226 are disordered; it reads DVSTENSYTHNNSRDDEPQNGKRTYNNQSNNNLPYDNSSYNIS. Coiled-coil stretches lie at residues 267 to 319 and 436 to 477; these read DNYP…DNYP and RDNH…HYKR.

The protein localises to the membrane. This is an uncharacterized protein from Plasmodium falciparum (isolate 3D7).